The chain runs to 496 residues: Cytochrome P450 71D181 (496 aa).

The helical; Signal-anchor for type II membrane protein transmembrane segment at 1–21 (MDISILWVAIILVISSYFIFM) threads the bilayer. A heme-binding site is contributed by cysteine 435. The disordered stretch occupies residues 471 to 496 (MSETPGLSGPRKNPLIMVPTIHNPTS).

It belongs to the cytochrome P450 family. Heme is required as a cofactor.

It is found in the membrane. It carries out the reaction gamma-terpinene + 2 reduced [NADPH--hemoprotein reductase] + 2 O2 = carvacrol + 2 oxidized [NADPH--hemoprotein reductase] + 3 H2O + 2 H(+). The catalysed reaction is (4S)-limonene + reduced [NADPH--hemoprotein reductase] + O2 = (1S,5R)-carveol + oxidized [NADPH--hemoprotein reductase] + H2O + H(+). The enzyme catalyses (4R)-limonene + reduced [NADPH--hemoprotein reductase] + O2 = (1R,5S)-carveol + oxidized [NADPH--hemoprotein reductase] + H2O + H(+). It catalyses the reaction alpha-terpinene + 2 reduced [NADPH--hemoprotein reductase] + 2 O2 = carvacrol + 2 oxidized [NADPH--hemoprotein reductase] + 3 H2O + 2 H(+). It functions in the pathway secondary metabolite biosynthesis; terpenoid biosynthesis. Functionally, involved in the biosynthesis of phenolic monoterpenes natural products thymol and carvacrol which have a broad range of biological activities acting as antimicrobial compounds, insecticides, antioxidants and pharmaceutical agents. Catalyzes the C2-hydroxylation of gamma-terpinene and alpha-terpinene to produce carvacrol. Also mediates the C6-hydroxylation of (4S)-limonene and (4R)-limonene to form carveol. This Thymus vulgaris (Thyme) protein is Cytochrome P450 71D181.